A 168-amino-acid polypeptide reads, in one-letter code: Large ribosomal subunit protein uL10 (168 aa).

It belongs to the universal ribosomal protein uL10 family. In terms of assembly, part of the ribosomal stalk of the 50S ribosomal subunit. The N-terminus interacts with L11 and the large rRNA to form the base of the stalk. The C-terminus forms an elongated spine to which L12 dimers bind in a sequential fashion forming a multimeric L10(L12)X complex.

In terms of biological role, forms part of the ribosomal stalk, playing a central role in the interaction of the ribosome with GTP-bound translation factors. In Paracidovorax citrulli (strain AAC00-1) (Acidovorax citrulli), this protein is Large ribosomal subunit protein uL10.